The sequence spans 698 residues: DNA-directed RNA polymerase subunit beta' (698 aa).

Zn(2+) is bound by residues Cys69, Cys71, Cys89, and Cys92. The Mg(2+) site is built by Asp509, Asp511, and Asp513.

The protein belongs to the RNA polymerase beta' chain family. RpoC1 subfamily. As to quaternary structure, in plastids the minimal PEP RNA polymerase catalytic core is composed of four subunits: alpha, beta, beta', and beta''. When a (nuclear-encoded) sigma factor is associated with the core the holoenzyme is formed, which can initiate transcription. Mg(2+) serves as cofactor. It depends on Zn(2+) as a cofactor.

It localises to the plastid. The protein resides in the chloroplast. The catalysed reaction is RNA(n) + a ribonucleoside 5'-triphosphate = RNA(n+1) + diphosphate. In terms of biological role, DNA-dependent RNA polymerase catalyzes the transcription of DNA into RNA using the four ribonucleoside triphosphates as substrates. The sequence is that of DNA-directed RNA polymerase subunit beta' from Cryptomeria japonica (Japanese cedar).